A 421-amino-acid chain; its full sequence is Adenylosuccinate synthetase (421 aa).

GTP contacts are provided by residues 11 to 17 (GDEGKGK) and 39 to 41 (GHT). Asp-12 serves as the catalytic Proton acceptor. Mg(2+) contacts are provided by Asp-12 and Gly-39. Residues 12–15 (DEGK), 37–40 (NAGH), Thr-124, Arg-138, Gln-220, Thr-235, and Arg-299 each bind IMP. The Proton donor role is filled by His-40. Residue 295–301 (TTTGRPR) participates in substrate binding. Residues Arg-301, 327-329 (KLD), and 409-411 (SVG) contribute to the GTP site.

It belongs to the adenylosuccinate synthetase family. Homodimer. Mg(2+) is required as a cofactor.

It is found in the cytoplasm. The enzyme catalyses IMP + L-aspartate + GTP = N(6)-(1,2-dicarboxyethyl)-AMP + GDP + phosphate + 2 H(+). It functions in the pathway purine metabolism; AMP biosynthesis via de novo pathway; AMP from IMP: step 1/2. Functionally, plays an important role in the de novo pathway of purine nucleotide biosynthesis. Catalyzes the first committed step in the biosynthesis of AMP from IMP. The sequence is that of Adenylosuccinate synthetase from Methanothrix thermoacetophila (strain DSM 6194 / JCM 14653 / NBRC 101360 / PT) (Methanosaeta thermophila).